Here is a 246-residue protein sequence, read N- to C-terminus: Large ribosomal subunit protein uL3 (246 aa).

The residue at position 151 (Q151) is an N5-methylglutamine.

The protein belongs to the universal ribosomal protein uL3 family. As to quaternary structure, part of the 50S ribosomal subunit. Forms a cluster with proteins L14 and L19. Methylated by PrmB.

In terms of biological role, one of the primary rRNA binding proteins, it binds directly near the 3'-end of the 23S rRNA, where it nucleates assembly of the 50S subunit. The chain is Large ribosomal subunit protein uL3 from Bartonella bacilliformis (strain ATCC 35685 / KC583 / Herrer 020/F12,63).